The sequence spans 329 residues: Ribonucleoside-diphosphate reductase subunit beta (329 aa).

Positions 66, 97, and 101 each coordinate Fe cation. The active site involves tyrosine 105. Glutamate 164, glutamate 198, and histidine 201 together coordinate Fe cation.

Belongs to the ribonucleoside diphosphate reductase small chain family. Tetramer of two alpha and two beta subunits. Fe cation serves as cofactor.

It carries out the reaction a 2'-deoxyribonucleoside 5'-diphosphate + [thioredoxin]-disulfide + H2O = a ribonucleoside 5'-diphosphate + [thioredoxin]-dithiol. Its function is as follows. Provides the precursors necessary for DNA synthesis. Catalyzes the biosynthesis of deoxyribonucleotides from the corresponding ribonucleotides. The chain is Ribonucleoside-diphosphate reductase subunit beta (nrdF) from Bacillus subtilis (strain 168).